The sequence spans 520 residues: Ribonuclease Y (520 aa).

The chain crosses the membrane as a helical span at residues 3–23 (IELAIIFIVLAAGAGFLIGNL). Residues 210–273 (TVSVVALPSD…EVAKIALEKL (64 aa)) form the KH domain. Residues 336-429 (VYQHSLEVAF…VQAADALSGA (94 aa)) enclose the HD domain.

The protein belongs to the RNase Y family.

The protein resides in the cell membrane. Functionally, endoribonuclease that initiates mRNA decay. This chain is Ribonuclease Y, found in Geobacter sulfurreducens (strain ATCC 51573 / DSM 12127 / PCA).